The chain runs to 517 residues: Nicotine N-demethylase CYP82E4 (517 aa).

The chain crosses the membrane as a helical span at residues 2-22 (VFPIEAIVGLVTFTFLFFFLW). Residue Lys254 forms a Glycyl lysine isopeptide (Lys-Gly) (interchain with G-Cter in ubiquitin) linkage. Cys457 is a binding site for heme.

Belongs to the cytochrome P450 family. CYP82E2 subfamily. Heme is required as a cofactor. In terms of tissue distribution, expressed at low levels in green leaves.

It is found in the membrane. It catalyses the reaction (S)-nicotine + reduced [NADPH--hemoprotein reductase] + O2 = (S)-nornicotine + formaldehyde + oxidized [NADPH--hemoprotein reductase] + H2O + H(+). Its pathway is alkaloid biosynthesis; nicotine biosynthesis. Its function is as follows. Involved in the biosynthesis of pyridine alkaloid natural products, leading mainly to the production of anabasine, anatabine, nicotine and nornicotine, effective deterrents against herbivores with antiparasitic and pesticide properties (neurotoxins); nornicotine serves as the precursor in the synthesis of the carcinogen compound N'-nitrosonornicotine (NNN). Catalyzes the demethylation of nicotine to form nornicotine. The protein is Nicotine N-demethylase CYP82E4 of Nicotiana tabacum (Common tobacco).